The following is a 322-amino-acid chain: Zinc finger C2HC domain-containing protein zchc-1A (322 aa).

C2HC/C3H-type zinc fingers lie at residues Pro-9 to Leu-38 and Asp-119 to Arg-148. Residues Cys-13, Cys-16, His-28, Cys-32, Cys-123, Cys-126, His-138, and Cys-142 each coordinate Zn(2+). Positions Gln-150–Gly-159 are enriched in polar residues. Positions Gln-150–Phe-322 are disordered. The segment covering Asn-174–Asp-220 has biased composition (basic and acidic residues). Composition is skewed to polar residues over residues Thr-221–Ser-238 and Leu-264–Leu-274. The segment covering Thr-276–Ala-295 has biased composition (low complexity). Basic and acidic residues predominate over residues Cys-296–Arg-305. The span at Asn-311–Phe-322 shows a compositional bias: low complexity.

It belongs to the ZC2HC1 family. Zn(2+) is required as a cofactor.

The chain is Zinc finger C2HC domain-containing protein zchc-1A from Caenorhabditis elegans.